The chain runs to 530 residues: AP-4 complex subunit mu (530 aa).

The tract at residues 164–187 (PKQGVKPIHSGSKNSSSGGSSLST) is disordered. The segment covering 173 to 186 (SGSKNSSSGGSSLS) has biased composition (low complexity). The 301-residue stretch at 227–527 (DNEIYIDLCE…ITDSKSFVSR (301 aa)) folds into the MHD domain.

Belongs to the adaptor complexes medium subunit family. As to quaternary structure, may be part of the adaptor protein complex 4 (AP-4), a heterotetramer composed of two large adaptins (epsilon-type subunitand beta-type subunit), a medium adaptin (mu-type subunit) and a small adaptin (sigma-type).

The protein localises to the golgi apparatus. The protein resides in the trans-Golgi network membrane. It is found in the early endosome. Probable component of an adaptor protein complex. Adaptor protein complexes are vesicle coat components involved both in vesicle formation and cargo selection. They control the vesicular transport of proteins in different trafficking pathways. The sequence is that of AP-4 complex subunit mu (apm4) from Dictyostelium discoideum (Social amoeba).